Reading from the N-terminus, the 175-residue chain is Ribosome maturation factor RimM (175 aa).

In terms of domain architecture, PRC barrel spans 97–170; sequence NGQYYWTDVL…YLYVDWQMAW (74 aa).

It belongs to the RimM family. As to quaternary structure, binds ribosomal protein uS19.

The protein localises to the cytoplasm. Its function is as follows. An accessory protein needed during the final step in the assembly of 30S ribosomal subunit, possibly for assembly of the head region. Essential for efficient processing of 16S rRNA. May be needed both before and after RbfA during the maturation of 16S rRNA. It has affinity for free ribosomal 30S subunits but not for 70S ribosomes. The protein is Ribosome maturation factor RimM of Dichelobacter nodosus (strain VCS1703A).